We begin with the raw amino-acid sequence, 400 residues long: WD repeat and FYVE domain-containing protein 2 (400 aa).

WD repeat units follow at residues 22–61 (GSQEVVNMAVIVPKEEGVISVSEDRTVRVWLKRDSGQYWP), 66–105 (AMPSPCSCMSFNPETRRLSIGLDNGTISEFILSEDYNKMT), 112–150 (AHQSRVTMILFVLELEWVLSTGQDKQFAWHCSESGQRLG), 153–192 (RTSAVASGLQFDVETRHVFIGDHSGQVTILKLEQENCTLV), 197–236 (GHTGGVTALCWDPVQRVLFSGSSDHSVIMWDIGGRKGTAI), and 240–279 (GHNDRVQALSYAQHTRQLISCGGDGGIVVWNMDVERQETP). The segment at 281-352 (WLDSDSCQKC…VCDSCHEAIT (72 aa)) adopts an FYVE-type zinc-finger fold. Zn(2+) is bound by residues Cys287, Cys290, Cys314, Cys317, Cys322, Cys325, Cys344, and Cys347. The stretch at 364-399 (DSKHNIVHVHFDATRGWLLTSGTDKVIKLWDMTPVV) is one WD 7 repeat.

Homodimer. Interacts (via WD repeats 1-3) with AKT1, AKT2, PRKCZ and PRKCI. Interacts with VAMP2. Forms a complex with VAMP2 and PRKCZ. Interacts with FOXO1. Forms a complex with AKT1 and FOXO1.

The protein resides in the endosome. It is found in the early endosome. Its subcellular location is the cytoplasm. Functionally, acts in an adapter protein-like fashion to mediate the interaction between the kinase PRKCZ and its substrate VAMP2 and increases the PRKCZ-dependent phosphorylation of VAMP2. Positively regulates adipocyte differentiation, by facilitating the phosphorylation and thus inactivation of the anti-adipogenetic transcription factor FOXO1 by the kinase AKT1. Plays a role in endosomal control of AKT2 signaling; required for insulin-stimulated AKT2 phosphorylation and glucose uptake and insulin-stimulated phosphorylation of AKT2 substrates. Participates in transferrin receptor endocytosis. The protein is WD repeat and FYVE domain-containing protein 2 (WDFY2) of Homo sapiens (Human).